A 174-amino-acid polypeptide reads, in one-letter code: Phospholipase A2-like protein Y52B11A.8 (174 aa).

Residues 1–18 (MRGLLVATWIFVSVAASA) form the signal peptide. 2 N-linked (GlcNAc...) asparagine glycosylation sites follow: Asn-49 and Asn-143. The tract at residues 137–174 (YEASGPNASTTEESPAEKDDYDYESHVAGLNATPSSST) is disordered.

It belongs to the phospholipase A2 family.

The protein resides in the secreted. The polypeptide is Phospholipase A2-like protein Y52B11A.8 (Caenorhabditis elegans).